Consider the following 286-residue polypeptide: E3 ubiquitin-protein ligase SINA-like 7 (286 aa).

Residues 51 to 87 form an RING-type zinc finger; that stretch reads CPICYEAFTIPIFQCDNGHLACSSCCPKLNNKCPACT. The segment at 101–285 is SBD; that stretch reads VLESILIPCP…MRISVKKLNK (185 aa). Residues 104–162 form an SIAH-type zinc finger; that stretch reads SILIPCPNAKLGCKKNVSYGKELTHEKECMFSHCACPALDCNYTSSYKDLYTHYRITHM. Zn(2+) contacts are provided by Cys-109, Cys-116, His-128, Cys-132, Cys-139, Cys-144, His-156, and His-161.

This sequence belongs to the SINA (Seven in absentia) family.

It catalyses the reaction S-ubiquitinyl-[E2 ubiquitin-conjugating enzyme]-L-cysteine + [acceptor protein]-L-lysine = [E2 ubiquitin-conjugating enzyme]-L-cysteine + N(6)-ubiquitinyl-[acceptor protein]-L-lysine.. It functions in the pathway protein modification; protein ubiquitination. In terms of biological role, E3 ubiquitin-protein ligase that mediates ubiquitination and subsequent proteasomal degradation of target proteins. E3 ubiquitin ligases accept ubiquitin from an E2 ubiquitin-conjugating enzyme in the form of a thioester and then directly transfers the ubiquitin to targeted substrates. It probably triggers the ubiquitin-mediated degradation of different substrates. This Arabidopsis thaliana (Mouse-ear cress) protein is E3 ubiquitin-protein ligase SINA-like 7.